We begin with the raw amino-acid sequence, 232 residues long: Glycerol-3-phosphate acyltransferase 4 (232 aa).

A run of 6 helical transmembrane segments spans residues Val4–Leu24, Leu54–Leu76, Leu80–Phe99, Gly107–Leu127, Val143–Val163, and Thr168–Pro188.

This sequence belongs to the PlsY family. In terms of assembly, probably interacts with PlsX.

It is found in the cell membrane. The catalysed reaction is an acyl phosphate + sn-glycerol 3-phosphate = a 1-acyl-sn-glycero-3-phosphate + phosphate. The protein operates within lipid metabolism; phospholipid metabolism. Catalyzes the transfer of an acyl group from acyl-phosphate (acyl-PO(4)) to glycerol-3-phosphate (G3P) to form lysophosphatidic acid (LPA). This enzyme utilizes acyl-phosphate as fatty acyl donor, but not acyl-CoA or acyl-ACP. The protein is Glycerol-3-phosphate acyltransferase 4 of Dehalococcoides mccartyi (strain CBDB1).